Consider the following 149-residue polypeptide: MESTFIMIKPDGVQRGLIGEIISRFEKKGFYLKALKLVNVERSFAEKHYADLSSKPFFQGLVDYIISGPVVAMVWEGKSVVTTGRKIIGATNPLVSEPGTIRGDFAVDIGRNVIHGSDSIESANKEIALWFPEGLADWQSSQHPWIYEK.

ATP-binding residues include Lys-9, Phe-57, Arg-85, Thr-91, Arg-102, and Asn-112. Residue His-115 is the Pros-phosphohistidine intermediate of the active site.

Belongs to the NDK family. Mg(2+) serves as cofactor. In terms of processing, autophosphorylated.

The catalysed reaction is a 2'-deoxyribonucleoside 5'-diphosphate + ATP = a 2'-deoxyribonucleoside 5'-triphosphate + ADP. It carries out the reaction a ribonucleoside 5'-diphosphate + ATP = a ribonucleoside 5'-triphosphate + ADP. In terms of biological role, major role in the synthesis of nucleoside triphosphates other than ATP. The ATP gamma phosphate is transferred to the NDP beta phosphate via a ping-pong mechanism, using a phosphorylated active-site intermediate. Also exhibits a kinase-like activity towards histone H1. This is Nucleoside diphosphate kinase 1 (NDPK1) from Saccharum officinarum (Sugarcane).